The chain runs to 221 residues: UPF0502 protein PSPA7_1674 (221 aa).

The protein belongs to the UPF0502 family.

The polypeptide is UPF0502 protein PSPA7_1674 (Pseudomonas paraeruginosa (strain DSM 24068 / PA7) (Pseudomonas aeruginosa (strain PA7))).